The primary structure comprises 90 residues: Large ribosomal subunit protein eL37 (90 aa).

Zn(2+) is bound by residues C19, C22, C34, and C37. The C4-type zinc finger occupies 19–37 (CRRCGRQSYHKQKNSCSSC). Over residues 21-31 (RCGRQSYHKQK) the composition is skewed to basic residues. Residues 21 to 59 (RCGRQSYHKQKNSCSSCGYPNPKMRNPGSIKARRRRTIG) form a disordered region.

It belongs to the eukaryotic ribosomal protein eL37 family. Requires Zn(2+) as cofactor.

Its function is as follows. Binds to the 23S rRNA. This Encephalitozoon cuniculi (strain GB-M1) (Microsporidian parasite) protein is Large ribosomal subunit protein eL37 (RPL37).